The sequence spans 870 residues: DNA mismatch repair protein MutS (870 aa).

Residue 629 to 636 (GPNMGGKS) coordinates ATP.

The protein belongs to the DNA mismatch repair MutS family.

This protein is involved in the repair of mismatches in DNA. It is possible that it carries out the mismatch recognition step. This protein has a weak ATPase activity. This chain is DNA mismatch repair protein MutS, found in Polaromonas naphthalenivorans (strain CJ2).